A 135-amino-acid polypeptide reads, in one-letter code: C-type lectin APL (135 aa).

4 disulfides stabilise this stretch: cysteine 3-cysteine 14, cysteine 31-cysteine 131, cysteine 38-cysteine 133, and cysteine 106-cysteine 123. The C-type lectin domain occupies 10-132 (MNGLCYKIFD…CESKNAFLCQ (123 aa)). Ca(2+) contacts are provided by glutamine 96, aspartate 98, glutamate 104, asparagine 119, and aspartate 120. The short motif at 96–98 (QPD) is the Galactose-binding element.

The protein belongs to the true venom lectin family. As to quaternary structure, homodimer; disulfide-linked. Expressed by the venom gland.

Its subcellular location is the secreted. Beta-galactoside lectin that agglutinates rabbit and human erythrocytes in a calcium-dependent fashion (MHC is 0.21 ug/ml on rabbit erythrocytes). Galactose (15 mM), lactose (20 mM), rhamnose (20 mM) and EGTA strongly inhibit this activity. The polypeptide is C-type lectin APL (Agkistrodon piscivorus piscivorus (Eastern cottonmouth)).